Consider the following 325-residue polypeptide: Phospholipid phosphatase-related protein type 1 (325 aa).

N-linked (GlcNAc...) asparagine glycosylation occurs at asparagine 5. 3 consecutive transmembrane segments (helical) span residues 13-33 (IIPCFIFVELVIMAGTVLLAY), 67-87 (FITPLVLYCVLAATPTAIIFI), and 127-147 (FTGVFAFGLFATDIFVNAGQV). Residue asparagine 163 is glycosylated (N-linked (GlcNAc...) asparagine). 3 helical membrane passes run 201-218 (AALSIYSALYATMYITST), 230-247 (VLCLGTLCTAFLTGLNRV), and 257-277 (VIAGFILGTAVALFLGMCVVH). Position 307 is a phosphoserine (serine 307). The N-linked (GlcNAc...) asparagine glycan is linked to asparagine 316.

Belongs to the PA-phosphatase related phosphoesterase family.

The protein localises to the cell membrane. The protein resides in the cell projection. It is found in the neuron projection. May play a role in neurite outgrowth and neurogenesis. The sequence is that of Phospholipid phosphatase-related protein type 1 from Homo sapiens (Human).